A 291-amino-acid chain; its full sequence is Phosphatidylserine decarboxylase proenzyme (291 aa).

Catalysis depends on charge relay system; for autoendoproteolytic cleavage activity residues aspartate 90, histidine 147, and serine 253. Catalysis depends on serine 253, which acts as the Schiff-base intermediate with substrate; via pyruvic acid; for decarboxylase activity. The residue at position 253 (serine 253) is a Pyruvic acid (Ser); by autocatalysis.

It belongs to the phosphatidylserine decarboxylase family. PSD-B subfamily. Prokaryotic type I sub-subfamily. As to quaternary structure, heterodimer of a large membrane-associated beta subunit and a small pyruvoyl-containing alpha subunit. Pyruvate is required as a cofactor. In terms of processing, is synthesized initially as an inactive proenzyme. Formation of the active enzyme involves a self-maturation process in which the active site pyruvoyl group is generated from an internal serine residue via an autocatalytic post-translational modification. Two non-identical subunits are generated from the proenzyme in this reaction, and the pyruvate is formed at the N-terminus of the alpha chain, which is derived from the carboxyl end of the proenzyme. The autoendoproteolytic cleavage occurs by a canonical serine protease mechanism, in which the side chain hydroxyl group of the serine supplies its oxygen atom to form the C-terminus of the beta chain, while the remainder of the serine residue undergoes an oxidative deamination to produce ammonia and the pyruvoyl prosthetic group on the alpha chain. During this reaction, the Ser that is part of the protease active site of the proenzyme becomes the pyruvoyl prosthetic group, which constitutes an essential element of the active site of the mature decarboxylase.

It localises to the cell membrane. The enzyme catalyses a 1,2-diacyl-sn-glycero-3-phospho-L-serine + H(+) = a 1,2-diacyl-sn-glycero-3-phosphoethanolamine + CO2. It participates in phospholipid metabolism; phosphatidylethanolamine biosynthesis; phosphatidylethanolamine from CDP-diacylglycerol: step 2/2. Its function is as follows. Catalyzes the formation of phosphatidylethanolamine (PtdEtn) from phosphatidylserine (PtdSer). The sequence is that of Phosphatidylserine decarboxylase proenzyme from Photobacterium profundum (strain SS9).